A 103-amino-acid chain; its full sequence is Alkanal monooxygenase alpha chain (103 aa).

In terms of assembly, heterodimer of an alpha and a beta chain.

It catalyses the reaction a long-chain fatty aldehyde + FMNH2 + O2 = a long-chain fatty acid + hnu + FMN + H2O + 2 H(+). In terms of biological role, light-emitting reaction in luminous bacteria. The sequence is that of Alkanal monooxygenase alpha chain (luxA) from Vibrio cholerae.